Consider the following 85-residue polypeptide: Large ribosomal subunit protein bL27 (85 aa).

Residues 1 to 20 (MAHKKAGGSTRNGRDSEAKR) form a disordered region.

Belongs to the bacterial ribosomal protein bL27 family.

This Escherichia coli O139:H28 (strain E24377A / ETEC) protein is Large ribosomal subunit protein bL27.